Consider the following 212-residue polypeptide: Ribosomal RNA small subunit methyltransferase G (212 aa).

Residues G80, L85, A131–E132, and R146 each bind S-adenosyl-L-methionine.

Belongs to the methyltransferase superfamily. RNA methyltransferase RsmG family.

The protein localises to the cytoplasm. It carries out the reaction guanosine(527) in 16S rRNA + S-adenosyl-L-methionine = N(7)-methylguanosine(527) in 16S rRNA + S-adenosyl-L-homocysteine. In terms of biological role, specifically methylates the N7 position of guanine in position 527 of 16S rRNA. In Stenotrophomonas maltophilia (strain K279a), this protein is Ribosomal RNA small subunit methyltransferase G.